Reading from the N-terminus, the 360-residue chain is Lipid-A-disaccharide synthase (360 aa).

This sequence belongs to the LpxB family.

The enzyme catalyses a lipid X + a UDP-2-N,3-O-bis[(3R)-3-hydroxyacyl]-alpha-D-glucosamine = a lipid A disaccharide + UDP + H(+). Its pathway is bacterial outer membrane biogenesis; LPS lipid A biosynthesis. Its function is as follows. Condensation of UDP-2,3-diacylglucosamine and 2,3-diacylglucosamine-1-phosphate to form lipid A disaccharide, a precursor of lipid A, a phosphorylated glycolipid that anchors the lipopolysaccharide to the outer membrane of the cell. This chain is Lipid-A-disaccharide synthase, found in Helicobacter pylori (strain G27).